The chain runs to 209 residues: Octanoyltransferase (209 aa).

The BPL/LPL catalytic domain maps to 30-209; the sequence is VNEPEIVYLV…IQTEFNKIFT (180 aa). Substrate-binding positions include 69–76, 143–145, and 156–158; these read RGGKFTFH, AIG, and GVA. Cys174 functions as the Acyl-thioester intermediate in the catalytic mechanism.

Belongs to the LipB family.

The protein localises to the cytoplasm. It catalyses the reaction octanoyl-[ACP] + L-lysyl-[protein] = N(6)-octanoyl-L-lysyl-[protein] + holo-[ACP] + H(+). It functions in the pathway protein modification; protein lipoylation via endogenous pathway; protein N(6)-(lipoyl)lysine from octanoyl-[acyl-carrier-protein]: step 1/2. In terms of biological role, catalyzes the transfer of endogenously produced octanoic acid from octanoyl-acyl-carrier-protein onto the lipoyl domains of lipoate-dependent enzymes. Lipoyl-ACP can also act as a substrate although octanoyl-ACP is likely to be the physiological substrate. The sequence is that of Octanoyltransferase from Rickettsia canadensis (strain McKiel).